The following is a 155-amino-acid chain: Ribosomal RNA large subunit methyltransferase H 1 (155 aa).

Residues leucine 76, glycine 108, and 127-132 contribute to the S-adenosyl-L-methionine site; that span reads FSKMTF.

This sequence belongs to the RNA methyltransferase RlmH family. As to quaternary structure, homodimer.

It localises to the cytoplasm. It carries out the reaction pseudouridine(1915) in 23S rRNA + S-adenosyl-L-methionine = N(3)-methylpseudouridine(1915) in 23S rRNA + S-adenosyl-L-homocysteine + H(+). Functionally, specifically methylates the pseudouridine at position 1915 (m3Psi1915) in 23S rRNA. The polypeptide is Ribosomal RNA large subunit methyltransferase H 1 (Thermoanaerobacter pseudethanolicus (strain ATCC 33223 / 39E) (Clostridium thermohydrosulfuricum)).